Here is a 45-residue protein sequence, read N- to C-terminus: GHVPCGKDGRKCGYHADCCNCCLSGICKPSTSWTGCSTSTFLLTR.

Disulfide bonds link C5–C19, C12–C22, C18–C27, and C21–C36. L43 carries the D-leucine modification. A propeptide (removed by a carboxypeptidase) is located at residue R45.

It belongs to the conotoxin I1 superfamily. Expressed by the venom duct.

The protein localises to the secreted. Iota-conotoxins bind to voltage-gated sodium channels (Nav) and act as agonists by shifting the voltage-dependence of activation to more hyperpolarized levels. Produces general excitatory symptoms. This chain is Iota-conotoxin-like R11.13, found in Conus radiatus (Rayed cone).